Reading from the N-terminus, the 438-residue chain is Aspartate--tRNA(Asp) ligase (438 aa).

Position 170 (glutamate 170) interacts with L-aspartate. Residues 192–195 (QLYK) are aspartate. Arginine 214 lines the L-aspartate pocket. ATP contacts are provided by residues 214 to 216 (RAE), 222 to 224 (RHL), and glutamate 361. Mg(2+)-binding residues include glutamate 361 and serine 364. L-aspartate-binding residues include serine 364 and arginine 368. 409 to 412 (GAER) provides a ligand contact to ATP.

This sequence belongs to the class-II aminoacyl-tRNA synthetase family. Type 2 subfamily. As to quaternary structure, homodimer. Mg(2+) is required as a cofactor.

The protein localises to the cytoplasm. It carries out the reaction tRNA(Asp) + L-aspartate + ATP = L-aspartyl-tRNA(Asp) + AMP + diphosphate. Catalyzes the attachment of L-aspartate to tRNA(Asp) in a two-step reaction: L-aspartate is first activated by ATP to form Asp-AMP and then transferred to the acceptor end of tRNA(Asp). The chain is Aspartate--tRNA(Asp) ligase from Pyrococcus furiosus (strain ATCC 43587 / DSM 3638 / JCM 8422 / Vc1).